A 393-amino-acid chain; its full sequence is MLPDKKLGSPNHRFHHWLVRQAIAALDNAQVSAQAIESIEKTYFDGGKIAPDSQRGVNTYNYFKSTLERELLKIKFNLARFNATNLLNNSEDFQITEAEIIVKLDAIEKIIAKYRFSEDLVEVDSQSSAEINNISPKRSNFFNIQRDLSAQDEQKILQNLRNLRLQRRIATRFLIVLIFIPLTVQILTKNLVFAPLVQHFRVDIVAWEKIHYQEETIEHYFEEFARYKETLEIKQLLSENQPLNQEKIHQELKKKAEELIRQAATNSQQGIVNLLADIAGLVAFVVLIIVFRGKSIITQQYLSQSFLALNDITKVFIFILLTDMFVGFHSAHGWEVVLENLTSHFGLPENRHAVYIFIATVPVFLDSLFKLLIFNYFTRQSPTSVAILEKMQQ.

4 helical membrane passes run 173–193, 271–291, 306–326, and 354–374; these read FLIV…NLVF, IVNL…IIVF, FLAL…DMFV, and VYIF…LLIF.

This sequence belongs to the CemA family. PxcL subfamily.

The protein resides in the cell inner membrane. In terms of biological role, together with PxcA, contributes to transient H(+) uptake following dark to light transition. Required for H(+) influx to activate the Calvin-Benson-Bassham cycle. May also be involved in CO(2) transport. In Synechocystis sp. (strain ATCC 27184 / PCC 6803 / Kazusa), this protein is PxcA-like protein.